Here is a 100-residue protein sequence, read N- to C-terminus: Urease subunit gamma (100 aa).

It belongs to the urease gamma subunit family. Heterotrimer of UreA (gamma), UreB (beta) and UreC (alpha) subunits. Three heterotrimers associate to form the active enzyme.

The protein localises to the cytoplasm. It carries out the reaction urea + 2 H2O + H(+) = hydrogencarbonate + 2 NH4(+). It functions in the pathway nitrogen metabolism; urea degradation; CO(2) and NH(3) from urea (urease route): step 1/1. This is Urease subunit gamma from Citrobacter koseri (strain ATCC BAA-895 / CDC 4225-83 / SGSC4696).